The chain runs to 1031 residues: Probable ATP-dependent RNA helicase DDX46 (1031 aa).

Over residues 1–24 (MGRESRHYRKRSASRGRSGSRSRS) the composition is skewed to basic residues. Positions 1–228 (MGRESRHYRK…EMEGEELDPL (228 aa)) are disordered. The N-myristoyl glycine moiety is linked to residue glycine 2. Residues 26-49 (SPSDKRSKRGDDRRSRSRDRDRRR) show a composition bias toward basic and acidic residues. 2 stretches are compositionally biased toward basic residues: residues 50–73 (ERSR…RSRS) and 81–103 (ERRR…RRSR). A compositionally biased stretch (basic and acidic residues) spans 112 to 200 (KKTENRSRSK…EMKQGKKWSL (89 aa)). A coiled-coil region spans residues 152–197 (DQNKLEEEMRKRKERVEKWREEQRKKAMENIGELKKEIEEMKQGKK). Lysine 186 participates in a covalent cross-link: Glycyl lysine isopeptide (Lys-Gly) (interchain with G-Cter in SUMO2). A Phosphoserine modification is found at serine 199. Composition is skewed to acidic residues over residues 201–211 (EDDDDDEDDPA) and 219–228 (EMEGEELDPL). Lysine 263 bears the N6-acetyllysine mark. The residue at position 294 (tyrosine 294) is a Phosphotyrosine. Serine 295 and serine 296 each carry phosphoserine. Residue lysine 325 forms a Glycyl lysine isopeptide (Lys-Gly) (interchain with G-Cter in SUMO2) linkage. At serine 346 the chain carries Phosphoserine. The short motif at 372 to 400 (KSWVQCGISMKILNSLKKHGYEKPTPIQT) is the Q motif element. The 179-residue stretch at 403–581 (IPAIMSGRDL…RRILSKPIEV (179 aa)) folds into the Helicase ATP-binding domain. ATP is bound at residue 416-423 (AKTGSGKT). The DEAD box motif lies at 529 to 532 (DEAD). The 162-residue stretch at 592–753 (DVEQQVIVIE…AVPPDLEKLW (162 aa)) folds into the Helicase C-terminal domain. Lysine 776 carries the N6-acetyllysine modification. A Glycyl lysine isopeptide (Lys-Gly) (interchain with G-Cter in SUMO2) cross-link involves residue lysine 779. Serine 804 carries the post-translational modification Phosphoserine. Lysine 903 carries the N6-acetyllysine modification. Residues lysine 907 and lysine 915 each participate in a glycyl lysine isopeptide (Lys-Gly) (interchain with G-Cter in SUMO2) cross-link. The residue at position 928 (serine 928) is a Phosphoserine.

This sequence belongs to the DEAD box helicase family. DDX46/PRP5 subfamily. In terms of assembly, component of the 17S U2 SnRNP complex, a ribonucleoprotein complex that contains small nuclear RNA (snRNA) U2 and a number of specific proteins. Within the 17S U2 SnRNP complex, DDX46 is part of the SF3B subcomplex, which is required for 'A' complex assembly formed by the stable binding of U2 snRNP to the branchpoint sequence in pre-mRNA. Recruited to the 17S U2 SnRNP complex following release of DDX42; DDX42 and DDX46 bind the SF3B subcomplex in a competitive manner.

It is found in the nucleus speckle. Its subcellular location is the nucleus. The protein resides in the cajal body. It catalyses the reaction ATP + H2O = ADP + phosphate + H(+). Component of the 17S U2 SnRNP complex of the spliceosome, a large ribonucleoprotein complex that removes introns from transcribed pre-mRNAs. The 17S U2 SnRNP complex (1) directly participates in early spliceosome assembly and (2) mediates recognition of the intron branch site during pre-mRNA splicing by promoting the selection of the pre-mRNA branch-site adenosine, the nucleophile for the first step of splicing. Within the 17S U2 SnRNP complex, DDX46 plays essential roles during assembly of pre-spliceosome and proofreading of the branch site. The sequence is that of Probable ATP-dependent RNA helicase DDX46 from Homo sapiens (Human).